The chain runs to 500 residues: GTPase Der (500 aa).

EngA-type G domains lie at 3–166 and 211–384; these read PVVA…MEEL and IKLA…VSAT. Residues 9 to 16, 56 to 60, 118 to 121, 217 to 224, 264 to 268, and 329 to 332 contribute to the GTP site; these read GRPNVGKS, DTGGI, NKID, DTAGV, and NKWD. Residues 385–469 form the KH-like domain; it reads KRVGTSVLTR…PIRIQFQNSE (85 aa). The disordered stretch occupies residues 481-500; the sequence is LSQERQRKRLVGAVKNRNKK. Positions 486 to 500 are enriched in basic residues; sequence QRKRLVGAVKNRNKK.

Belongs to the TRAFAC class TrmE-Era-EngA-EngB-Septin-like GTPase superfamily. EngA (Der) GTPase family. Associates with the 50S ribosomal subunit.

GTPase that plays an essential role in the late steps of ribosome biogenesis. The chain is GTPase Der from Aliivibrio salmonicida (strain LFI1238) (Vibrio salmonicida (strain LFI1238)).